The primary structure comprises 504 residues: Maturase K (504 aa).

This sequence belongs to the intron maturase 2 family. MatK subfamily.

Its subcellular location is the plastid. It localises to the chloroplast. Its function is as follows. Usually encoded in the trnK tRNA gene intron. Probably assists in splicing its own and other chloroplast group II introns. The polypeptide is Maturase K (Impatiens capensis (Spotted jewelweed)).